The sequence spans 86 residues: Chymotrypsin inhibitor (86 aa).

A signal peptide spans 1 to 16 (MKTLCIFLVLVVAVAA). Disulfide bonds link Cys-26-Cys-58, Cys-38-Cys-50, Cys-42-Cys-82, and Cys-60-Cys-76. The TIL domain maps to 26-82 (CPPNKEFGSYGDCPPSCLKNPPNFCTLKLNYGCKCKEGYVLTRYQDYESDCIKPEEC).

The protein belongs to the serine protease inhibitor-like (TIL domain-containing) family. In terms of tissue distribution, only expressed in fat body.

The protein localises to the secreted. In terms of biological role, serine protease inhibitor that inhibits chymotrypsin (IC(50)=34.13 nM, Ki=49.85 nM), microbial serine proteases (subtilisin A (IC(50)=21.31 nM, Ki=20.51 nM) and proteinase K (IC(50)=52.56 nM, Ki=65.42 nM)), as well as human neutrophil elastase (IC(50)=11.54 nM, Ki=8.74 nM), and porcine pancreatic elastase (IC(50)=19.07 nM, Ki=11.32 nM). The sequence is that of Chymotrypsin inhibitor from Araneus ventricosus (Orbweaver spider).